Here is a 122-residue protein sequence, read N- to C-terminus: Large ribosomal subunit protein bL12 (122 aa).

The protein belongs to the bacterial ribosomal protein bL12 family. Homodimer. Part of the ribosomal stalk of the 50S ribosomal subunit. Forms a multimeric L10(L12)X complex, where L10 forms an elongated spine to which 2 to 4 L12 dimers bind in a sequential fashion. Binds GTP-bound translation factors.

Functionally, forms part of the ribosomal stalk which helps the ribosome interact with GTP-bound translation factors. Is thus essential for accurate translation. The sequence is that of Large ribosomal subunit protein bL12 from Xylella fastidiosa (strain 9a5c).